The chain runs to 64 residues: Small ribosomal subunit protein eS17 (64 aa).

This sequence belongs to the eukaryotic ribosomal protein eS17 family.

This is Small ribosomal subunit protein eS17 from Methanococcoides burtonii (strain DSM 6242 / NBRC 107633 / OCM 468 / ACE-M).